Reading from the N-terminus, the 234-residue chain is Nuclear ubiquitous casein and cyclin-dependent kinase substrate 1 (234 aa).

Positions 1–234 (MSRPVRNRKV…SEDEASSGED (234 aa)) are disordered. Tyr-13 is subject to Phosphotyrosine. Phosphoserine is present on residues Ser-14 and Ser-19. Position 26 is a phosphotyrosine (Tyr-26). The span at 35–51 (KKIRSSPREAKNKRRSG) shows a compositional bias: basic residues. Residues Ser-54, Ser-58, Ser-61, Ser-73, Ser-75, and Ser-79 each carry the phosphoserine modification. Basic and acidic residues predominate over residues 64 to 77 (KDVKTKKDDSHSAE). A compositionally biased stretch (low complexity) spans 91–100 (QQRQAASKAA). Over residues 111–124 (VGSEEEPEEDDEAP) the composition is skewed to acidic residues. Phosphoserine is present on residues Ser-113, Ser-130, Ser-132, and Ser-144. The span at 132–145 (SDEDFLMEDDDDSD) shows a compositional bias: acidic residues. Residues 149–174 (SKKKNKKMVKKSKPERKEKKMPKPRL) are compositionally biased toward basic residues. Thr-179 bears the Phosphothreonine mark. At Ser-181 the chain carries Phosphoserine. Positions 185 to 199 (GKAKVGRPTASKKSK) are enriched in basic residues. The residue at position 202 (Thr-202) is a Phosphothreonine. Phosphoserine occurs at positions 204, 214, 225, and 231. The span at 223-234 (EGSEDEASSGED) shows a compositional bias: acidic residues.

In terms of assembly, does not interact with RAD51. Post-translationally, phosphorylated in an ATM-dependent manner in response to DNA damage. Phosphorylated by CDK1 and casein kinase.

The protein resides in the nucleus. It is found in the chromosome. Its function is as follows. Chromatin-associated protein involved in DNA repair by promoting homologous recombination (HR). Binds double-stranded DNA (dsDNA) and secondary DNA structures, such as D-loop structures, but with less affinity than RAD51AP1. The polypeptide is Nuclear ubiquitous casein and cyclin-dependent kinase substrate 1 (Nucks1) (Mus musculus (Mouse)).